The chain runs to 232 residues: Phosphatidylserine decarboxylase proenzyme (232 aa).

The active-site Schiff-base intermediate with substrate; via pyruvic acid is Ser-190. At Ser-190 the chain carries Pyruvic acid (Ser); by autocatalysis.

It belongs to the phosphatidylserine decarboxylase family. PSD-A subfamily. As to quaternary structure, heterodimer of a large membrane-associated beta subunit and a small pyruvoyl-containing alpha subunit. The cofactor is pyruvate. Is synthesized initially as an inactive proenzyme. Formation of the active enzyme involves a self-maturation process in which the active site pyruvoyl group is generated from an internal serine residue via an autocatalytic post-translational modification. Two non-identical subunits are generated from the proenzyme in this reaction, and the pyruvate is formed at the N-terminus of the alpha chain, which is derived from the carboxyl end of the proenzyme. The post-translation cleavage follows an unusual pathway, termed non-hydrolytic serinolysis, in which the side chain hydroxyl group of the serine supplies its oxygen atom to form the C-terminus of the beta chain, while the remainder of the serine residue undergoes an oxidative deamination to produce ammonia and the pyruvoyl prosthetic group on the alpha chain.

The protein localises to the cell membrane. It carries out the reaction a 1,2-diacyl-sn-glycero-3-phospho-L-serine + H(+) = a 1,2-diacyl-sn-glycero-3-phosphoethanolamine + CO2. It functions in the pathway phospholipid metabolism; phosphatidylethanolamine biosynthesis; phosphatidylethanolamine from CDP-diacylglycerol: step 2/2. Catalyzes the formation of phosphatidylethanolamine (PtdEtn) from phosphatidylserine (PtdSer). This chain is Phosphatidylserine decarboxylase proenzyme, found in Bradyrhizobium diazoefficiens (strain JCM 10833 / BCRC 13528 / IAM 13628 / NBRC 14792 / USDA 110).